The following is a 305-amino-acid chain: Ribosomal RNA small subunit methyltransferase H (305 aa).

S-adenosyl-L-methionine contacts are provided by residues 49 to 51 (GGH), D68, F100, D116, and Q123.

Belongs to the methyltransferase superfamily. RsmH family.

It is found in the cytoplasm. The catalysed reaction is cytidine(1402) in 16S rRNA + S-adenosyl-L-methionine = N(4)-methylcytidine(1402) in 16S rRNA + S-adenosyl-L-homocysteine + H(+). Functionally, specifically methylates the N4 position of cytidine in position 1402 (C1402) of 16S rRNA. The protein is Ribosomal RNA small subunit methyltransferase H of Synechocystis sp. (strain ATCC 27184 / PCC 6803 / Kazusa).